The sequence spans 57 residues: MKISFVLLLTLFICSIGWSEARPTDIKCSESYQCFPVCKSRFGKTNGRCVNGFCDCF.

The signal sequence occupies residues methionine 1–alanine 21. 3 disulfides stabilise this stretch: cysteine 28-cysteine 49, cysteine 34-cysteine 54, and cysteine 38-cysteine 56.

Belongs to the short scorpion toxin superfamily. Potassium channel inhibitor family. Gamma-KTx 2 subfamily. As to expression, expressed by the venom gland.

It localises to the secreted. Functionally, blocks human and/or rat Kv11.1/KCNH2/ERG1, Kv11.2/KCNH6/ERG2 and Kv11.3/KCNH7/ERG3 by binding to channel outer vestibule (S5P domain) with a 1:1 stoichiometry. Inhibition data are the following: hERG1 (reversible, Kd=7.7 nM, IC(50)=3.3 nM, IC(50)=11.9 nM), rERG1 (reversible, Kd=19 nM), hERG2 (reversible, Kd=77 nM), rERG2 (irreversible, Kd=4.2 nM), hERG3 (reversible, Kd=11.5 nM) and rERG3 (reversible, Kd=747 nM) potassium channels. Also has a minimal effect on rat ELK1/KCNH4 potassium channels (9% inhibition at 100 nM). Both this toxin and CnErgTx1 (AC Q86QT3) share mechanism of action and have overlapping binding sites on ERG1. The potency of these two toxins is not affected by elevating potassium ion concentration from 2 to 98 mM. In addition, at high toxin concentrations, block of ERG1 macroscopic currents by these two toxins is incomplete (88%). The blockade by this toxin is preferentially closed channel state-dependent, with a component of open, but not inactive state-dependent blockade. This toxin produces a concentration-dependent prolongation of QTc in the isolated rabbit heart (16.3% at 100 nM). This chain is Potassium channel toxin gamma-KTx 2.1, found in Mesobuthus eupeus (Lesser Asian scorpion).